The sequence spans 151 residues: UPF0208 membrane protein YfbV (151 aa).

Over methionine 1–arginine 45 the chain is Cytoplasmic. The helical transmembrane segment at tyrosine 46 to leucine 65 threads the bilayer. At glycine 66–glutamine 68 the chain is on the periplasmic side. Residues leucine 69–glycine 91 form a helical membrane-spanning segment. The Cytoplasmic segment spans residues lysine 92–leucine 151.

This sequence belongs to the UPF0208 family.

It localises to the cell inner membrane. The sequence is that of UPF0208 membrane protein YfbV (yfbV) from Salmonella typhi.